We begin with the raw amino-acid sequence, 85 residues long: Cell division topological specificity factor (85 aa).

The protein belongs to the MinE family.

Functionally, prevents the cell division inhibition by proteins MinC and MinD at internal division sites while permitting inhibition at polar sites. This ensures cell division at the proper site by restricting the formation of a division septum at the midpoint of the long axis of the cell. The chain is Cell division topological specificity factor from Shewanella sp. (strain ANA-3).